Reading from the N-terminus, the 435-residue chain is 5-methylthioadenosine/S-adenosylhomocysteine deaminase (435 aa).

His-65 and His-67 together coordinate Zn(2+). Glu-94, Arg-150, and His-189 together coordinate substrate. Residue His-216 coordinates Zn(2+). Positions 219 and 304 each coordinate substrate. Residue Asp-304 coordinates Zn(2+).

Belongs to the metallo-dependent hydrolases superfamily. MTA/SAH deaminase family. The cofactor is Zn(2+).

It carries out the reaction S-adenosyl-L-homocysteine + H2O + H(+) = S-inosyl-L-homocysteine + NH4(+). The catalysed reaction is S-methyl-5'-thioadenosine + H2O + H(+) = S-methyl-5'-thioinosine + NH4(+). Functionally, catalyzes the deamination of 5-methylthioadenosine and S-adenosyl-L-homocysteine into 5-methylthioinosine and S-inosyl-L-homocysteine, respectively. Is also able to deaminate adenosine. The polypeptide is 5-methylthioadenosine/S-adenosylhomocysteine deaminase (Bacillus cereus (strain B4264)).